The primary structure comprises 133 residues: MTYNEKIISMNNDLLDHQHKELFEISKKLSLMNQRHVGTKELKIVLRELLIMINRHFSDEEAFMREIEYPYINHHTRIHRKIILEIEEIIISEAKFVNIMTEKLNLVVQDFIFKHTAKEDSKIVKYYEEKFKK.

Residues His-19, His-56, Glu-60, His-75, His-79, His-115, and Asp-120 each contribute to the Fe cation site.

It belongs to the hemerythrin family. Monomer.

In terms of biological role, oxygen-binding protein. May be involved in a storage mechanism or for delivery to oxygen-requiring enzymes. The oxygen-binding site contains two iron atoms. This Campylobacter jejuni subsp. jejuni serotype O:6 (strain 81116 / NCTC 11828) protein is Bacteriohemerythrin.